We begin with the raw amino-acid sequence, 78 residues long: U-scoloptoxin(04)-Er1d (78 aa).

The first 24 residues, methionine 1–alanine 24, serve as a signal peptide directing secretion. Positions arginine 25–arginine 28 are excised as a propeptide.

Belongs to the scoloptoxin-04 family. Contains 2 disulfide bonds. Expressed by the venom gland.

It localises to the secreted. The sequence is that of U-scoloptoxin(04)-Er1d from Ethmostigmus rubripes (Giant centipede).